The following is a 1069-amino-acid chain: Thyrotropin-releasing hormone-degrading ectoenzyme (1069 aa).

The span at Met-1–Glu-11 shows a compositional bias: acidic residues. The disordered stretch occupies residues Met-1 to Met-46. Over Met-1–Leu-85 the chain is Cytoplasmic. Over residues Lys-15–Lys-25 the composition is skewed to basic residues. The helical; Signal-anchor for type II membrane protein transmembrane segment at Val-86–Leu-106 threads the bilayer. Topologically, residues Ser-107 to His-1069 are extracellular. A disordered region spans residues Ala-117–Glu-179. Gly residues predominate over residues Ala-121–Ser-136. 5 N-linked (GlcNAc...) asparagine glycosylation sites follow: Asn-134, Asn-205, Asn-220, Asn-267, and Asn-383. Residue Ala-449–Asn-453 participates in substrate binding. His-485 lines the Zn(2+) pocket. Glu-486 (proton acceptor) is an active-site residue. Residues His-489 and Glu-508 each contribute to the Zn(2+) site. 7 N-linked (GlcNAc...) asparagine glycosylation sites follow: Asn-650, Asn-679, Asn-694, Asn-708, Asn-729, Asn-845, and Asn-951.

Belongs to the peptidase M1 family. As to quaternary structure, homodimer; disulfide-linked. Zn(2+) serves as cofactor. As to expression, predominantly expressed in brain.

The protein resides in the membrane. The catalysed reaction is Release of the N-terminal pyroglutamyl group from pGlu-|-His-Xaa tripeptides and pGlu-|-His-Xaa-Gly tetrapeptides.. In terms of biological role, specific inactivation of TRH after its release. In Homo sapiens (Human), this protein is Thyrotropin-releasing hormone-degrading ectoenzyme (TRHDE).